Consider the following 434-residue polypeptide: Putative ankyrin repeat protein FPV219 (434 aa).

7 ANK repeats span residues 33 to 62 (DDLSPLHHAVSRGYKEIVISMLEHGADVNL), 66 to 95 (EVCSPLHIAIKNDNVEMVQLLIDNGADTDC), 101 to 131 (HGTPLQCAILNENYRITDALLESGADTHEIY), 132 to 161 (TKNHPIIEAIKLDNLPLVRLLLRHGADVNT), 165 to 195 (LYGYPIHLAIRYGNIDIIKELLYHGVIESYS), 196 to 225 (LYPSLLHQSIMCNNKEVVLLLISMGFDVNA), and 229 to 258 (EGNTPMHLAVQKNLVGIVKILLDKGADTSI).

The sequence is that of Putative ankyrin repeat protein FPV219 from Fowlpox virus (strain NVSL) (FPV).